We begin with the raw amino-acid sequence, 310 residues long: Glutaminase (310 aa).

Substrate is bound by residues serine 67, asparagine 118, glutamate 161, asparagine 168, tyrosine 192, tyrosine 244, and valine 262.

Belongs to the glutaminase family. As to quaternary structure, homotetramer.

The enzyme catalyses L-glutamine + H2O = L-glutamate + NH4(+). This Legionella pneumophila (strain Paris) protein is Glutaminase.